The primary structure comprises 131 residues: Fumarate reductase subunit C (131 aa).

3 consecutive transmembrane segments (helical) span residues 30-50, 61-81, and 110-130; these read EGTA…LFAL, IGFL…AAAL, and IKGL…VALF.

The protein belongs to the FrdC family. Part of an enzyme complex containing four subunits: a flavoprotein (FrdA), an iron-sulfur protein (FrdB), and two hydrophobic anchor proteins (FrdC and FrdD).

The protein resides in the cell inner membrane. Functionally, two distinct, membrane-bound, FAD-containing enzymes are responsible for the catalysis of fumarate and succinate interconversion; fumarate reductase is used in anaerobic growth, and succinate dehydrogenase is used in aerobic growth. Anchors the catalytic components of the fumarate reductase complex to the cell inner membrane, binds quinones. The chain is Fumarate reductase subunit C from Klebsiella pneumoniae subsp. pneumoniae (strain ATCC 700721 / MGH 78578).